We begin with the raw amino-acid sequence, 269 residues long: uncharacterized protein (269 aa).

The next 8 membrane-spanning stretches (helical) occupy residues 9-29 (YIIGLVLALGVSFATLLAHLF), 50-70 (FMLGGYLLVEYLSFLLMIVPL), 82-102 (FSIIHTSIWYNVFVVFTVWAF), 107-127 (LYWTAFFSLCLFSSSFTMYGQ), 147-167 (LVFGKSLWFVVYAFSAALHCT), 173-193 (VFSNVFIWFFAAMYLVPILGF), 200-220 (LVSAYLFLSIGIGQMFIHLFA), and 224-244 (IFAFIIAGLMTLFAALLFLLP).

The protein localises to the membrane. This is an uncharacterized protein from Schizosaccharomyces pombe (strain 972 / ATCC 24843) (Fission yeast).